The sequence spans 122 residues: Large ribosomal subunit protein uL14 (122 aa).

The protein belongs to the universal ribosomal protein uL14 family. Part of the 50S ribosomal subunit. Forms a cluster with proteins L3 and L19. In the 70S ribosome, L14 and L19 interact and together make contacts with the 16S rRNA in bridges B5 and B8.

In terms of biological role, binds to 23S rRNA. Forms part of two intersubunit bridges in the 70S ribosome. This Baumannia cicadellinicola subsp. Homalodisca coagulata protein is Large ribosomal subunit protein uL14.